The primary structure comprises 164 residues: Dehydrin Rab16C (164 aa).

Positions 42–51 (MGGHHAGAGG) are enriched in gly residues. The interval 42-164 (MGGHHAGAGG…KIKEKLPGQH (123 aa)) is disordered. Residues 105–115 (GNNQQQQQMMG) show a composition bias toward low complexity. The span at 128-138 (GMTGAGTGTGV) shows a compositional bias: gly residues. Residues 147–164 (GEKKGFMDKIKEKLPGQH) are compositionally biased toward basic and acidic residues.

The protein belongs to the plant dehydrin family.

This chain is Dehydrin Rab16C (RAB16C), found in Oryza sativa subsp. japonica (Rice).